Here is a 567-residue protein sequence, read N- to C-terminus: uncharacterized protein (567 aa).

The Lumenal segment spans residues 1–31; the sequence is MLDTILINVFRRDGDDDDDDGQDPALQELYS. A helical membrane pass occupies residues 32–52; the sequence is SWALFILLVLLIGALLTSYYV. The Cytoplasmic portion of the chain corresponds to 53–64; sequence QSKKIRAIHETV. A helical transmembrane segment spans residues 65–85; it reads ISVFVGMVVGLIIRVSPGLII. Over 86-87 the chain is Lumenal; it reads QN. A helical transmembrane segment spans residues 88 to 108; the sequence is MVSFHSTYFFNVLLPPIILNS. The Cytoplasmic segment spans residues 109 to 128; sequence GYELHQSNFFRNIGTILTFA. The helical transmembrane segment at 129–149 threads the bilayer; sequence FAGTFISAVTLGVLVYIFSFL. Residues 150–159 lie on the Lumenal side of the membrane; that stretch reads NFENLSMTFV. A helical membrane pass occupies residues 160-180; that stretch reads EALSMGATLSATDPVTVLAIF. Residues 181–188 lie on the Cytoplasmic side of the membrane; it reads NSYKVDQK. Residues 189–209 traverse the membrane as a helical segment; sequence LYTIIFGESILNDAVAIVMFE. Topologically, residues 210 to 227 are lumenal; that stretch reads TLQQFQGKTLHFFTLFSG. The chain crosses the membrane as a helical span at residues 228-248; that stretch reads IGIFIITFFISLLIGVSIGLI. The Cytoplasmic segment spans residues 249–277; that stretch reads TALLLKYSYLRRYPSIESCIILLMAYTSY. A helical membrane pass occupies residues 278 to 298; that stretch reads FFSNGCHMSGVVSLLFCGITL. The Lumenal segment spans residues 299–315; that stretch reads KHYAFFNMSYKAKLSTK. The chain crosses the membrane as a helical span at residues 316–338; it reads YVFRVLAQLSENFIFIYLGMSLF. Residues 339–347 are Cytoplasmic-facing; sequence TQVDLVYKP. A helical transmembrane segment spans residues 348–366; sequence IFILITTVAVTASRYMNVF. Topologically, residues 367–392 are lumenal; it reads PLSNLLNKFHRQRNGNLIDHIPYSYQ. A helical transmembrane segment spans residues 393-413; that stretch reads MMLFWAGLRGAVGVALAAGFE. Residues 414-424 are Cytoplasmic-facing; that stretch reads GENAQTLRATT. A helical membrane pass occupies residues 425–445; it reads LVVVVLTLIIFGGTTARMLEI. Over 446 to 567 the chain is Lumenal; sequence LHIETGVAAD…RDNLKNGTKK (122 aa). Residue serine 515 is modified to Phosphoserine.

Belongs to the monovalent cation:proton antiporter 1 (CPA1) transporter (TC 2.A.36) family.

It localises to the golgi apparatus membrane. This is an uncharacterized protein from Schizosaccharomyces pombe (strain 972 / ATCC 24843) (Fission yeast).